The primary structure comprises 360 residues: DNA replication and repair protein RecF (360 aa).

30-37 (GQNGSGKT) is a binding site for ATP.

The protein belongs to the RecF family.

It is found in the cytoplasm. The RecF protein is involved in DNA metabolism; it is required for DNA replication and normal SOS inducibility. RecF binds preferentially to single-stranded, linear DNA. It also seems to bind ATP. This is DNA replication and repair protein RecF from Shewanella baltica (strain OS223).